A 476-amino-acid chain; its full sequence is Sulfate adenylyltransferase subunit 1 (476 aa).

Residues 24–228 (KSLLRFLTCG…MAWYQGPTLL (205 aa)) enclose the tr-type G domain. The G1 stretch occupies residues 33–40 (GSVDDGKS). 33–40 (GSVDDGKS) contacts GTP. The segment at 91–95 (GITID) is G2. The segment at 112 to 115 (DTPG) is G3. GTP is bound by residues 112–116 (DTPGH) and 167–170 (NKMD). The tract at residues 167–170 (NKMD) is G4. Positions 205-207 (SAL) are G5.

The protein belongs to the TRAFAC class translation factor GTPase superfamily. Classic translation factor GTPase family. CysN/NodQ subfamily. As to quaternary structure, heterodimer composed of CysD, the smaller subunit, and CysN.

The catalysed reaction is sulfate + ATP + H(+) = adenosine 5'-phosphosulfate + diphosphate. It functions in the pathway sulfur metabolism; hydrogen sulfide biosynthesis; sulfite from sulfate: step 1/3. Functionally, with CysD forms the ATP sulfurylase (ATPS) that catalyzes the adenylation of sulfate producing adenosine 5'-phosphosulfate (APS) and diphosphate, the first enzymatic step in sulfur assimilation pathway. APS synthesis involves the formation of a high-energy phosphoric-sulfuric acid anhydride bond driven by GTP hydrolysis by CysN coupled to ATP hydrolysis by CysD. In Vibrio vulnificus (strain CMCP6), this protein is Sulfate adenylyltransferase subunit 1.